Consider the following 455-residue polypeptide: Argininosuccinate lyase (455 aa).

It belongs to the lyase 1 family. Argininosuccinate lyase subfamily.

It localises to the cytoplasm. The enzyme catalyses 2-(N(omega)-L-arginino)succinate = fumarate + L-arginine. It participates in amino-acid biosynthesis; L-arginine biosynthesis; L-arginine from L-ornithine and carbamoyl phosphate: step 3/3. The sequence is that of Argininosuccinate lyase from Shewanella baltica (strain OS223).